The sequence spans 1038 residues: GTPase-activating Rap/Ran-GAP domain-like protein 3 (1038 aa).

Residues Lys6 and Ser68 each carry the phosphoserine modification. One can recognise a Rap-GAP domain in the interval Leu214–Leu430. Ser449 and Ser455 each carry phosphoserine. Residues Pro512–Tyr824 form the CNH domain. 2 disordered regions span residues Glu833–Ser863 and Leu937–Lys1038. Thr851 is subject to Phosphothreonine. Positions Ser1019 to Ala1028 are enriched in polar residues.

It belongs to the GARNL3 family.

The chain is GTPase-activating Rap/Ran-GAP domain-like protein 3 (Garnl3) from Mus musculus (Mouse).